Here is a 214-residue protein sequence, read N- to C-terminus: Redox-sensing transcriptional repressor Rex (214 aa).

Residues 18 to 57 (LYYRLVNQLHEKGIDRVNSKTISEALDIDSASIRRDFSYF) constitute a DNA-binding region (H-T-H motif). Position 92-97 (92-97 (GVGNLG)) interacts with NAD(+).

Belongs to the transcriptional regulatory Rex family. Homodimer.

The protein resides in the cytoplasm. Modulates transcription in response to changes in cellular NADH/NAD(+) redox state. In Staphylococcus carnosus (strain TM300), this protein is Redox-sensing transcriptional repressor Rex.